The chain runs to 214 residues: Probable nicotinate-nucleotide adenylyltransferase (214 aa).

The protein belongs to the NadD family.

The enzyme catalyses nicotinate beta-D-ribonucleotide + ATP + H(+) = deamido-NAD(+) + diphosphate. It participates in cofactor biosynthesis; NAD(+) biosynthesis; deamido-NAD(+) from nicotinate D-ribonucleotide: step 1/1. Functionally, catalyzes the reversible adenylation of nicotinate mononucleotide (NaMN) to nicotinic acid adenine dinucleotide (NaAD). This Pelodictyon phaeoclathratiforme (strain DSM 5477 / BU-1) protein is Probable nicotinate-nucleotide adenylyltransferase.